The primary structure comprises 218 residues: Small ribosomal subunit protein uS3c (218 aa).

The 72-residue stretch at 47–118 folds into the KH type-2 domain; sequence IRRHMRSSSN…KLNIAIVKVA (72 aa).

This sequence belongs to the universal ribosomal protein uS3 family. In terms of assembly, part of the 30S ribosomal subunit.

It is found in the plastid. The protein resides in the chloroplast. This is Small ribosomal subunit protein uS3c (rps3) from Cycas taitungensis (Prince sago).